A 226-amino-acid polypeptide reads, in one-letter code: Transmembrane gamma-carboxyglutamic acid protein 4 (226 aa).

Residues 1–17 (MFTLLVLLSQLPTVTLG) form the signal peptide. Positions 18-49 (FPHCARGPKASKHAGEEVFTSKEEANFFIHRR) are excised as a propeptide. Residues 50-113 (LLYNRFDLEL…KSDGNREKID (64 aa)) are Extracellular-facing. Residues 52–98 (YNRFDLELFTPGNLERECNEELCNYEEAREIFVDEDKTIAFWQEYSA) form the Gla domain. A disulfide bridge connects residues cysteine 69 and cysteine 74. Residue glutamate 72 is modified to 4-carboxyglutamate. A helical transmembrane segment spans residues 114 to 134 (VMGLLTGLIAAGVFLVIFGLL). Residues 135–226 (GYYLCITKCN…FKKSMSLPSH (92 aa)) are Cytoplasmic-facing. Phosphoserine is present on serine 163. The LPXY motif; mediates binding to WW domain-containing proteins signature appears at 186-189 (LPSY). Positions 204–207 (PPPY) match the PPXY motif; mediates binding to WW domain-containing proteins motif.

It belongs to the commissureless family. As to quaternary structure, interacts (via cytoplasmic domain) with WW domain-containing proteins MAGI1, MAGI3, NEDD4, NEDD4L, WWTR1/TAZ and YAP1. Post-translationally, gamma-carboxyglutamate residues are formed by vitamin K dependent carboxylation. These residues are essential for the binding of calcium. Widely expressed with highest levels in kidney.

It localises to the endoplasmic reticulum-Golgi intermediate compartment membrane. Its subcellular location is the cell membrane. May control axon guidance across the CNS. Prevents the delivery of ROBO1 at the cell surface and down-regulates its expression. In Homo sapiens (Human), this protein is Transmembrane gamma-carboxyglutamic acid protein 4.